A 402-amino-acid chain; its full sequence is Cysteine-rich venom protein (402 aa).

Positions 1–13 (MNLALFIIFATIF) are cleaved as a signal peptide. The SCP domain maps to 57–199 (LETHNQLRNK…VKKVLYTCNY (143 aa)).

The protein belongs to the CRISP family. Contains 7 disulfide bonds. As to expression, expressed by the venom gland.

It is found in the secreted. This chain is Cysteine-rich venom protein, found in Tityus serrulatus (Brazilian scorpion).